The primary structure comprises 334 residues: Transcription factor MYB92 (334 aa).

2 HTH myb-type domains span residues 9–61 (DSGL…TNYL) and 62–116 (RPDI…KKKL). DNA-binding regions (H-T-H motif) lie at residues 37-61 (WRAL…TNYL) and 89-112 (WSTI…NTHL).

Interacts with FBX5. In terms of tissue distribution, highly expressed in roots and at lower levels in stems, flowers and siliques.

It is found in the nucleus. In terms of biological role, probable transcription factor. In Arabidopsis thaliana (Mouse-ear cress), this protein is Transcription factor MYB92.